The following is a 270-amino-acid chain: NADPH-dependent 7-cyano-7-deazaguanine reductase (270 aa).

79 to 81 contributes to the substrate binding site; sequence IES. 81 to 82 lines the NADPH pocket; the sequence is SK. The active-site Thioimide intermediate is Cys-177. The active-site Proton donor is Asp-184. 216–217 serves as a coordination point for substrate; that stretch reads HE. Residue 245–246 participates in NADPH binding; it reads RG.

Belongs to the GTP cyclohydrolase I family. QueF type 2 subfamily. As to quaternary structure, homodimer.

The protein localises to the cytoplasm. The catalysed reaction is 7-aminomethyl-7-carbaguanine + 2 NADP(+) = 7-cyano-7-deazaguanine + 2 NADPH + 3 H(+). The protein operates within tRNA modification; tRNA-queuosine biosynthesis. Its function is as follows. Catalyzes the NADPH-dependent reduction of 7-cyano-7-deazaguanine (preQ0) to 7-aminomethyl-7-deazaguanine (preQ1). This is NADPH-dependent 7-cyano-7-deazaguanine reductase from Acinetobacter baumannii (strain ACICU).